The following is a 288-amino-acid chain: ATP synthase gamma chain (288 aa).

The protein belongs to the ATPase gamma chain family. As to quaternary structure, F-type ATPases have 2 components, CF(1) - the catalytic core - and CF(0) - the membrane proton channel. CF(1) has five subunits: alpha(3), beta(3), gamma(1), delta(1), epsilon(1). CF(0) has three main subunits: a, b and c.

The protein resides in the cell inner membrane. Its function is as follows. Produces ATP from ADP in the presence of a proton gradient across the membrane. The gamma chain is believed to be important in regulating ATPase activity and the flow of protons through the CF(0) complex. In Aeromonas hydrophila subsp. hydrophila (strain ATCC 7966 / DSM 30187 / BCRC 13018 / CCUG 14551 / JCM 1027 / KCTC 2358 / NCIMB 9240 / NCTC 8049), this protein is ATP synthase gamma chain.